Consider the following 247-residue polypeptide: Trypsin-2 (247 aa).

The first 15 residues, 1 to 15, serve as a signal peptide directing secretion; sequence MNLLLILTFVAAAVA. A propeptide spans 16-23 (activation peptide); the sequence is APFDDDDK. One can recognise a Peptidase S1 domain in the interval 24–244; sequence IVGGYICEEN…YVDWIKDTIA (221 aa). Disulfide bonds link cysteine 30/cysteine 160, cysteine 48/cysteine 64, cysteine 171/cysteine 185, and cysteine 196/cysteine 220. Histidine 63 functions as the Charge relay system in the catalytic mechanism. Residues glutamate 75, asparagine 77, valine 80, and glutamate 85 each coordinate Ca(2+). The Charge relay system role is filled by aspartate 107. Tyrosine 154 carries the post-translational modification Sulfotyrosine. The active-site Charge relay system is the serine 200.

The protein belongs to the peptidase S1 family. Ca(2+) serves as cofactor. In terms of processing, sulfated on tyrosine. Sulfation at Tyr-154 increases selectivity towards basic versus apolar residues at the P2' position of inhibitors that bind in a substrate-like fashion. Although the increase in selectivity is relatively small, it may facilitate digestion of a broader range of dietary proteins. As to expression, expressed in Paneth cells, at the base of small intestinal crypts.

It is found in the secreted. The protein resides in the extracellular space. It carries out the reaction Preferential cleavage: Arg-|-Xaa, Lys-|-Xaa.. Functionally, in the ileum, may be involved in defensin processing, including DEFA5. The protein is Trypsin-2 (PRSS2) of Homo sapiens (Human).